The chain runs to 78 residues: UPF0349 protein BLi03401/BL03152 (78 aa).

Belongs to the UPF0349 family.

The polypeptide is UPF0349 protein BLi03401/BL03152 (Bacillus licheniformis (strain ATCC 14580 / DSM 13 / JCM 2505 / CCUG 7422 / NBRC 12200 / NCIMB 9375 / NCTC 10341 / NRRL NRS-1264 / Gibson 46)).